The sequence spans 395 residues: Protein hedgehog (395 aa).

The signal sequence occupies residues 1 to 26; it reads MDNHSSVPWASAASVTCLSLDAKCHS. Positions 26–43 are enriched in low complexity; that stretch reads SSSSSCSSKSTASSISAS. The disordered stretch occupies residues 26–46; that stretch reads SSSSSCSSKSTASSISASPET. A propeptide spanning residues 27–82 is cleaved from the precursor; it reads SSSSCSSKSTASSISASPETQTMRHIAHTQRCLSRLTSLVALLLIVLPMMFSPAHS. Residue cysteine 83 is the site of N-palmitoyl cysteine attachment. Residues glutamate 147, glutamate 148, aspartate 153, threonine 183, glutamate 184, aspartate 187, and aspartate 189 each coordinate Ca(2+). Residue glycine 255 is the site of Cholesterol glycine ester attachment.

This sequence belongs to the hedgehog family. Interacts with shf. In terms of processing, the C-terminal part of the hedgehog protein precursor displays an autoproteolysis activity that results in the cleavage of the full-length protein into two parts (N-product and C-product). In addition, the C-terminal part displays a cholesterol transferase activity that results by the covalent attachment of a cholesterol moiety to the C-terminal of the newly generated N-product. The N-product is the active species in both local and long-range signaling, whereas the C-product has no signaling activity. Cholesterylation is required for N-product targeting to lipid rafts and multimerization. Post-translationally, N-palmitoylation by Rasp of the hedgehog N-product, within the secretory pathway, is required for the embryonic and larval patterning activities of the hedgehog signal.

Its subcellular location is the nucleus. The protein localises to the cytoplasm. It localises to the cell membrane. It catalyses the reaction glycyl-L-cysteinyl-[protein] + cholesterol + H(+) = [protein]-C-terminal glycyl cholesterol ester + N-terminal L-cysteinyl-[protein]. The C-terminal part of the hedgehog protein precursor displays an autoproteolysis activity that results in the cleavage of the full-length protein into two parts (N-product and C-product). In addition, the C-terminal part displays a cholesterol transferase activity that results by the covalent attachment of a cholesterol moiety to the C-terminal of the newly generated N-product. Once cleaved, the C-product has no signaling activity and diffuses from the cell. Its function is as follows. The dually lipidated hedgehog protein N-product is a morphogen which is essential for a variety of patterning events during development. Establishes the anterior-posterior axis of the embryonic segments and patterns the larval imaginal disks. Binds to the patched (ptc) receptor, which functions in association with smoothened (smo), to activate the transcription of target genes wingless (wg), decapentaplegic (dpp) and ptc. In the absence of hh, ptc represses the constitutive signaling activity of smo through fused (fu). Essential component of a signaling pathway which regulates the Duox-dependent gut immune response to bacterial uracil; required to activate Cad99C-dependent endosome formation, norpA-dependent Ca2+ mobilization and p38 MAPK, which are essential steps in the Duox-dependent production of reactive oxygen species (ROS) in response to intestinal bacterial infection. During photoreceptor differentiation, it up-regulates transcription of Ubr3, which in turn promotes the hh-signaling pathway by mediating the ubiquitination and degradation of cos. This Drosophila simulans (Fruit fly) protein is Protein hedgehog.